The following is a 430-amino-acid chain: Enolase (430 aa).

Q167 contacts (2R)-2-phosphoglycerate. The active-site Proton donor is E209. Positions 246, 287, and 314 each coordinate Mg(2+). K339, R368, S369, and K390 together coordinate (2R)-2-phosphoglycerate. The Proton acceptor role is filled by K339.

This sequence belongs to the enolase family. It depends on Mg(2+) as a cofactor.

The protein localises to the cytoplasm. It localises to the secreted. Its subcellular location is the cell surface. It catalyses the reaction (2R)-2-phosphoglycerate = phosphoenolpyruvate + H2O. The protein operates within carbohydrate degradation; glycolysis; pyruvate from D-glyceraldehyde 3-phosphate: step 4/5. Functionally, catalyzes the reversible conversion of 2-phosphoglycerate (2-PG) into phosphoenolpyruvate (PEP). It is essential for the degradation of carbohydrates via glycolysis. This chain is Enolase, found in Prochlorococcus marinus (strain MIT 9301).